The chain runs to 285 residues: Bifunctional protein FolD (285 aa).

NADP(+)-binding positions include 166-168 (GRS), S191, and T232.

Belongs to the tetrahydrofolate dehydrogenase/cyclohydrolase family. Homodimer.

It carries out the reaction (6R)-5,10-methylene-5,6,7,8-tetrahydrofolate + NADP(+) = (6R)-5,10-methenyltetrahydrofolate + NADPH. The enzyme catalyses (6R)-5,10-methenyltetrahydrofolate + H2O = (6R)-10-formyltetrahydrofolate + H(+). Its pathway is one-carbon metabolism; tetrahydrofolate interconversion. In terms of biological role, catalyzes the oxidation of 5,10-methylenetetrahydrofolate to 5,10-methenyltetrahydrofolate and then the hydrolysis of 5,10-methenyltetrahydrofolate to 10-formyltetrahydrofolate. In Chloroflexus aggregans (strain MD-66 / DSM 9485), this protein is Bifunctional protein FolD.